Consider the following 92-residue polypeptide: Small ribosomal subunit protein uS19c (92 aa).

Belongs to the universal ribosomal protein uS19 family.

The protein localises to the plastid. Its subcellular location is the chloroplast. Functionally, protein S19 forms a complex with S13 that binds strongly to the 16S ribosomal RNA. This chain is Small ribosomal subunit protein uS19c, found in Cyanidium caldarium (Red alga).